The primary structure comprises 132 residues: Large ribosomal subunit protein uL14 (132 aa).

This sequence belongs to the universal ribosomal protein uL14 family. Part of the 50S ribosomal subunit. Forms a cluster with proteins L3 and L24e, part of which may contact the 16S rRNA in 2 intersubunit bridges.

In terms of biological role, binds to 23S rRNA. Forms part of two intersubunit bridges in the 70S ribosome. The chain is Large ribosomal subunit protein uL14 from Methanocorpusculum labreanum (strain ATCC 43576 / DSM 4855 / Z).